Consider the following 705-residue polypeptide: MSSFQGQMAEYPTISIDRFDRENLKARAYFLSHCHKDHMKGLRAPSLKRRLECSLKVFLYCSPVTKELLLTSPKYRFWENRIITIEIETPTQISLVDEASGEKEEVVVTLLPAGHCPGSVMFLFQGSNGTVLYTGDFRLAKGEASRMELLHSGGRVKDIQSVYLDTTFCDPRFYQIPSREQCLRGILELVRSWVTRSPHHVVWLNCKAAYGYEYLFTNLSEELGVQVHVDKLDMFKNMPDILHHLTTDRNTQIHACRHPKAEECFQWNKLPCGITSQNKTALHTISIKPSTMWFGERTRKTNVIVRTGESSYRACFSFHSSFSEIKDFLSYICPVNVYPNVIPVGLTVDKVMDVLKPLCRSPQSVEPKYKPLGKLKRARTIHLDSEEDDDLFDDPLPTPLRHKVPYQLTLQPELFSMKALPLDQPELRQSPGGCKAESVWSPSLANFIDCEESNSDSGEELETPPPSLQGGLGPSTLVQQNADPDVDIPQWEVFFKRRDEITGECLEHLPSSIETGGSQSPKLCSDSPKLCSDSPKLCSDSDGDSTHISSQNSSQSTHITDQGSQGWDSQCDTVLLSSQEKSGGDSTSLNKGAYKPKLKESISASQIEQDALCPQDTHCDLKSRAEVNGAPCLVELDTLSGRKSPPEKTLLSSTRADSQSSSDFEIPSTPEAELPTPEHLQCLYRKLATGQSIVVEKRKCSLLDS.

The residue at position 380 (Thr-380) is a Phosphothreonine. At Ser-385 the chain carries Phosphoserine. Over residues 451–462 (EESNSDSGEELE) the composition is skewed to acidic residues. 3 disordered regions span residues 451 to 484 (EESNSDSGEELETPPPSLQGGLGPSTLVQQNADP), 535 to 569 (PKLCSDSDGDSTHISSQNSSQSTHITDQGSQGWDS), and 638 to 675 (TLSGRKSPPEKTLLSSTRADSQSSSDFEIPSTPEAELP). Positions 546–559 (THISSQNSSQSTHI) are enriched in low complexity. Over residues 560-569 (TDQGSQGWDS) the composition is skewed to polar residues. A compositionally biased stretch (low complexity) spans 652–662 (SSTRADSQSSS). Ser-658 bears the Phosphoserine; by ATM mark.

Belongs to the DNA repair metallo-beta-lactamase (DRMBL) family. In terms of assembly, interacts with LIG4; the interaction is direct. Interacts with ATM. Interacts with BRCA1. Interacts with PRKDC. Interacts with TP53BP1. Also exhibits ATM- and phosphorylation-dependent interaction with the MRN complex, composed of MRE11, RAD50, and NBN. Phosphorylation on undefined residues by PRKDC may stimulate endonucleolytic activity on 5' and 3' hairpins and overhangs. PRKDC must remain present, even after phosphorylation, for efficient hairpin opening. Also phosphorylated by ATM in response to ionizing radiation (IR) and by ATR in response to ultraviolet (UV) radiation.

It is found in the nucleus. Its function is as follows. Required for V(D)J recombination, the process by which exons encoding the antigen-binding domains of immunoglobulins and T-cell receptor proteins are assembled from individual V, (D), and J gene segments. V(D)J recombination is initiated by the lymphoid specific RAG endonuclease complex, which generates site specific DNA double strand breaks (DSBs). These DSBs present two types of DNA end structures: hairpin sealed coding ends and phosphorylated blunt signal ends. These ends are independently repaired by the non homologous end joining (NHEJ) pathway to form coding and signal joints respectively. This protein likely exhibits single-strand specific 5'-3' exonuclease activity in isolation, and may acquire endonucleolytic activity on 5' and 3' hairpins and overhangs when in a complex with PRKDC. The latter activity may be required specifically for the resolution of closed hairpins prior to the formation of the coding joint. May also be required for the repair of complex DSBs induced by ionizing radiation, which require substantial end-processing prior to religation by NHEJ. This Mus musculus (Mouse) protein is Protein artemis (Dclre1c).